Here is a 664-residue protein sequence, read N- to C-terminus: Chaperone protein DnaK (664 aa).

Thr201 is subject to Phosphothreonine; by autocatalysis. Residues 574 to 592 show a composition bias toward basic and acidic residues; the sequence is LKEDASTEKIKEASEELSR. Residues 574–664 are disordered; sequence LKEDASTEKI…DVEIVDKPND (91 aa). Low complexity predominate over residues 600 to 617; the sequence is AMQSQSASAAPSSAANAQ. Residues 639-649 show a composition bias toward polar residues; the sequence is GNSTSASSNNE.

This sequence belongs to the heat shock protein 70 family.

Acts as a chaperone. The chain is Chaperone protein DnaK from Chlamydia felis (strain Fe/C-56) (Chlamydophila felis).